The primary structure comprises 54 residues: Preprotein translocase subunit SecG (54 aa).

The Cytoplasmic segment spans residues 1 to 31 (MSSGSNSGGLMSSAGLVRYFDSEDRDAIAID). The chain crosses the membrane as a helical span at residues 32 to 53 (PKTVLAFCVLFGVFVQILSLTV). Residue Ala54 is a topological domain, extracellular.

Belongs to the SEC61-beta family. In terms of assembly, component of the protein translocase complex. Heterotrimer consisting of alpha (SecY), beta (SecG) and gamma (SecE) subunits. Can form oligomers of the heterotrimer.

Its subcellular location is the cell membrane. Its function is as follows. Involved in protein export. The function of the beta subunit is unknown, but it may be involved in stabilization of the trimeric complex. This chain is Preprotein translocase subunit SecG, found in Halorubrum lacusprofundi (strain ATCC 49239 / DSM 5036 / JCM 8891 / ACAM 34).